Here is a 282-residue protein sequence, read N- to C-terminus: MEMO1 family protein Cmaq_1590 (282 aa).

The protein belongs to the MEMO1 family.

In Caldivirga maquilingensis (strain ATCC 700844 / DSM 13496 / JCM 10307 / IC-167), this protein is MEMO1 family protein Cmaq_1590.